We begin with the raw amino-acid sequence, 221 residues long: Small ribosomal subunit protein uS3 (221 aa).

The KH type-2 domain maps to 39–107 (LRKFLKDKLK…EVFLSIQEVR (69 aa)).

This sequence belongs to the universal ribosomal protein uS3 family. Part of the 30S ribosomal subunit. Forms a tight complex with proteins S10 and S14.

Binds the lower part of the 30S subunit head. Binds mRNA in the 70S ribosome, positioning it for translation. The sequence is that of Small ribosomal subunit protein uS3 from Bdellovibrio bacteriovorus (strain ATCC 15356 / DSM 50701 / NCIMB 9529 / HD100).